Reading from the N-terminus, the 278-residue chain is 2-succinyl-6-hydroxy-2,4-cyclohexadiene-1-carboxylate synthase (278 aa).

Belongs to the AB hydrolase superfamily. MenH family. Monomer.

It catalyses the reaction 5-enolpyruvoyl-6-hydroxy-2-succinyl-cyclohex-3-ene-1-carboxylate = (1R,6R)-6-hydroxy-2-succinyl-cyclohexa-2,4-diene-1-carboxylate + pyruvate. It functions in the pathway quinol/quinone metabolism; 1,4-dihydroxy-2-naphthoate biosynthesis; 1,4-dihydroxy-2-naphthoate from chorismate: step 3/7. Its pathway is quinol/quinone metabolism; menaquinone biosynthesis. Its function is as follows. Catalyzes a proton abstraction reaction that results in 2,5-elimination of pyruvate from 2-succinyl-5-enolpyruvyl-6-hydroxy-3-cyclohexene-1-carboxylate (SEPHCHC) and the formation of 2-succinyl-6-hydroxy-2,4-cyclohexadiene-1-carboxylate (SHCHC). The chain is 2-succinyl-6-hydroxy-2,4-cyclohexadiene-1-carboxylate synthase from Photorhabdus laumondii subsp. laumondii (strain DSM 15139 / CIP 105565 / TT01) (Photorhabdus luminescens subsp. laumondii).